A 319-amino-acid polypeptide reads, in one-letter code: Urease accessory protein UreD (319 aa).

The disordered stretch occupies residues 298 to 319 (QEQPLPPSSFKTNTAVPAVRTH).

This sequence belongs to the UreD family. UreD, UreF and UreG form a complex that acts as a GTP-hydrolysis-dependent molecular chaperone, activating the urease apoprotein by helping to assemble the nickel containing metallocenter of UreC. The UreE protein probably delivers the nickel.

Its subcellular location is the cytoplasm. Required for maturation of urease via the functional incorporation of the urease nickel metallocenter. This is Urease accessory protein UreD from Synechococcus sp. (strain WH7805).